A 147-amino-acid chain; its full sequence is Protein phosphatase 1 regulatory subunit 14B (147 aa).

Residues 1 to 15 (MADSGPAGGAALAAP) show a composition bias toward low complexity. The tract at residues 1 to 55 (MADSGPAGGAALAAPAPGPGSGSTGPRVYFQSPPGAAGEGPGGADDDGPVRRQGK) is disordered. Residue A2 is modified to N-acetylalanine. A Phosphoserine modification is found at S21. Y29 is subject to Phosphotyrosine. Residue S32 is modified to Phosphoserine. Position 57 is a phosphothreonine (T57). Residues 61 to 103 (DRKELRKRLNLEEWILEQLTRLYDCQEEEIPELEIDVDELLDM) adopt a coiled-coil conformation.

This sequence belongs to the PP1 inhibitor family. Post-translationally, phosphorylated primarily on Thr-57 by PKC (in vitro). An unknown Ser is also phosphorylated by PKC (in vitro). In terms of tissue distribution, ubiquitous. Highly expressed in testis. Detected at low levels in the other tissues tested. Highly expressed in cardiac muscle, bladder and aorta (at protein level).

The protein localises to the cytoplasm. Functionally, inhibitor of PPP1CA. Has over 50-fold higher inhibitory activity when phosphorylated. This Mus musculus (Mouse) protein is Protein phosphatase 1 regulatory subunit 14B (Ppp1r14b).